The primary structure comprises 268 residues: Protein c-ets-1-B (268 aa).

The interval 131–139 (FKDYVRDRA) is helix HI-1. A helix HI-2 region spans residues 150–157 (AAALAGYT). A DNA-binding region (ETS) is located at residues 162 to 242 (IQLWQFLLEL…AGKRYVYRFV (81 aa)). A helix H4 region spans residues 245–249 (LQSLL). Residues 253-259 (PEELHAM) are helix H5.

This sequence belongs to the ETS family. In terms of assembly, binds DNA as a homodimer; homodimerization is required for transcription activation.

Its subcellular location is the nucleus. It localises to the cytoplasm. Autoinhibited by a module composed of four alpha helices (HI-1, HI-2, H4, and H5) that flank the DNA-binding ETS domain, reducing the affinity for DNA. Its function is as follows. Transcription factor. Directly controls the expression of cytokine and chemokine genes in a wide variety of different cellular contexts. This is Protein c-ets-1-B (ets1-b) from Xenopus laevis (African clawed frog).